The primary structure comprises 175 residues: tRNA (cytidine(56)-2'-O)-methyltransferase (175 aa).

Leu-83 contacts S-adenosyl-L-methionine.

This sequence belongs to the aTrm56 family. In terms of assembly, homodimer.

The protein resides in the cytoplasm. It carries out the reaction cytidine(56) in tRNA + S-adenosyl-L-methionine = 2'-O-methylcytidine(56) in tRNA + S-adenosyl-L-homocysteine + H(+). Specifically catalyzes the AdoMet-dependent 2'-O-ribose methylation of cytidine at position 56 in tRNAs. The protein is tRNA (cytidine(56)-2'-O)-methyltransferase of Methanosphaera stadtmanae (strain ATCC 43021 / DSM 3091 / JCM 11832 / MCB-3).